The sequence spans 246 residues: tRNA (guanine-N(7)-)-methyltransferase (246 aa).

A disordered region spans residues 1–26 (MIENPSPSAANLPEHPSTDASHPRNI). 4 residues coordinate S-adenosyl-L-methionine: glutamate 75, glutamate 100, aspartate 127, and aspartate 150. The active site involves aspartate 150. Lysine 154 contacts substrate. The interaction with RNA stretch occupies residues 156–161 (KHNKRR). Substrate contacts are provided by residues aspartate 186 and 225–228 (TKFE).

Belongs to the class I-like SAM-binding methyltransferase superfamily. TrmB family.

The enzyme catalyses guanosine(46) in tRNA + S-adenosyl-L-methionine = N(7)-methylguanosine(46) in tRNA + S-adenosyl-L-homocysteine. It participates in tRNA modification; N(7)-methylguanine-tRNA biosynthesis. Catalyzes the formation of N(7)-methylguanine at position 46 (m7G46) in tRNA. In Polaromonas sp. (strain JS666 / ATCC BAA-500), this protein is tRNA (guanine-N(7)-)-methyltransferase.